Reading from the N-terminus, the 359-residue chain is Phospho-N-acetylmuramoyl-pentapeptide-transferase (359 aa).

10 helical membrane-spanning segments follow: residues 3 to 23 (QILI…PVLI), 55 to 75 (VAII…GVLM), 84 to 104 (GLLV…DDLI), 117 to 137 (TAKT…ALQF), 156 to 176 (IATV…VVSA), 190 to 210 (LAAG…FWQF), 231 to 251 (LAII…WNAA), 255 to 275 (IFMG…LSVT), 283 to 303 (VVLG…ILAF), and 330 to 350 (VIIR…ALFY).

This sequence belongs to the glycosyltransferase 4 family. MraY subfamily. Mg(2+) serves as cofactor.

The protein resides in the cell membrane. The catalysed reaction is UDP-N-acetyl-alpha-D-muramoyl-L-alanyl-gamma-D-glutamyl-meso-2,6-diaminopimeloyl-D-alanyl-D-alanine + di-trans,octa-cis-undecaprenyl phosphate = di-trans,octa-cis-undecaprenyl diphospho-N-acetyl-alpha-D-muramoyl-L-alanyl-D-glutamyl-meso-2,6-diaminopimeloyl-D-alanyl-D-alanine + UMP. It functions in the pathway cell wall biogenesis; peptidoglycan biosynthesis. Catalyzes the initial step of the lipid cycle reactions in the biosynthesis of the cell wall peptidoglycan: transfers peptidoglycan precursor phospho-MurNAc-pentapeptide from UDP-MurNAc-pentapeptide onto the lipid carrier undecaprenyl phosphate, yielding undecaprenyl-pyrophosphoryl-MurNAc-pentapeptide, known as lipid I. This chain is Phospho-N-acetylmuramoyl-pentapeptide-transferase, found in Mycolicibacterium gilvum (strain PYR-GCK) (Mycobacterium gilvum (strain PYR-GCK)).